We begin with the raw amino-acid sequence, 521 residues long: Bifunctional purine biosynthesis protein PurH (521 aa).

The MGS-like domain occupies 1–145 (MIKQALISVS…KNHRDVTVVV (145 aa)).

The protein belongs to the PurH family.

It catalyses the reaction (6R)-10-formyltetrahydrofolate + 5-amino-1-(5-phospho-beta-D-ribosyl)imidazole-4-carboxamide = 5-formamido-1-(5-phospho-D-ribosyl)imidazole-4-carboxamide + (6S)-5,6,7,8-tetrahydrofolate. It carries out the reaction IMP + H2O = 5-formamido-1-(5-phospho-D-ribosyl)imidazole-4-carboxamide. Its pathway is purine metabolism; IMP biosynthesis via de novo pathway; 5-formamido-1-(5-phospho-D-ribosyl)imidazole-4-carboxamide from 5-amino-1-(5-phospho-D-ribosyl)imidazole-4-carboxamide (10-formyl THF route): step 1/1. It participates in purine metabolism; IMP biosynthesis via de novo pathway; IMP from 5-formamido-1-(5-phospho-D-ribosyl)imidazole-4-carboxamide: step 1/1. This is Bifunctional purine biosynthesis protein PurH from Burkholderia orbicola (strain AU 1054).